Reading from the N-terminus, the 171-residue chain is MEIILIKPVRKLGKIGDILKVANGFGRNYLLPQKLAIRATKSNKELIVKQKHEFEAKDKQIRAEVEKINTLIKDQQLVFIRQTSDDCKLFGSVTNKDIADKLSKNISYNISHSNVILDKQIKSTGIYTVEIRLHAELTAIVTVIVARSDSEAQDYLREQKTENSADLAESE.

Belongs to the bacterial ribosomal protein bL9 family.

Binds to the 23S rRNA. The polypeptide is Large ribosomal subunit protein bL9 (Rickettsia typhi (strain ATCC VR-144 / Wilmington)).